The chain runs to 417 residues: Leucine-rich repeat-containing protein 42 (417 aa).

LRR repeat units follow at residues 167–188 (CLRS…LEHL), 195–215 (SLTE…RKMT), 227–249 (ALKV…FLFG), and 252–273 (LLQF…VKKI). The interval 360 to 399 (FFRPEEQKDSDSSKSDKRQRSTKRTGADPGQEDCTIAPAT) is disordered. Over residues 362–378 (RPEEQKDSDSSKSDKRQ) the composition is skewed to basic and acidic residues.

This sequence belongs to the LRRC42 family.

The protein is Leucine-rich repeat-containing protein 42 (lrrc42) of Xenopus tropicalis (Western clawed frog).